We begin with the raw amino-acid sequence, 170 residues long: Putative pre-16S rRNA nuclease (170 aa).

Residues 1–25 form a disordered region; it reads MVPAQHRPPDRPGDPAHDPGRGRRL. The segment covering 7–21 has biased composition (basic and acidic residues); the sequence is RPPDRPGDPAHDPGR.

Belongs to the YqgF nuclease family.

It is found in the cytoplasm. Its function is as follows. Could be a nuclease involved in processing of the 5'-end of pre-16S rRNA. This is Putative pre-16S rRNA nuclease from Mycobacterium tuberculosis (strain ATCC 25177 / H37Ra).